Consider the following 436-residue polypeptide: Na(+)/H(+) antiporter NhaA (436 aa).

Helical transmembrane passes span 31–51 (VGGALLLAATIAALIWANSPG), 74–94 (LSLGAWASDGLLAIFFFIAGL), 112–132 (IVPIAAAIGGVAVPAIIYTLI), 143–163 (GWAIPTATDIAFALAVLAVIS), 173–193 (FLLTLAVVDDLIAISIIAVFY), 196–216 (NLQPQYLALALIPLGLFTWAV), 222–242 (SWYLLLPLAIITWVLVHESGV), 285–305 (VAVPIFAFFSAGVAIGGWAGF), 315–335 (IGIIAALILGKAIGIFGATFL), 350–370 (WIDVLGLAILAGIGFTVSLLI), and 384–404 (HAKVAILTASLVAALLATVIL).

The protein belongs to the NhaA Na(+)/H(+) (TC 2.A.33) antiporter family.

It is found in the cell membrane. The catalysed reaction is Na(+)(in) + 2 H(+)(out) = Na(+)(out) + 2 H(+)(in). Na(+)/H(+) antiporter that extrudes sodium in exchange for external protons. The sequence is that of Na(+)/H(+) antiporter NhaA from Renibacterium salmoninarum (strain ATCC 33209 / DSM 20767 / JCM 11484 / NBRC 15589 / NCIMB 2235).